A 388-amino-acid polypeptide reads, in one-letter code: S-adenosylmethionine synthase (388 aa).

Histidine 16 is an ATP binding site. Aspartate 18 is a Mg(2+) binding site. K(+) is bound at residue glutamate 44. 2 residues coordinate L-methionine: glutamate 57 and glutamine 100. The tract at residues 100–110 (QSPDIAQGVDK) is flexible loop. ATP is bound by residues 167 to 169 (DAK), 233 to 234 (RF), aspartate 242, 248 to 249 (RK), alanine 265, and lysine 269. Aspartate 242 contacts L-methionine. Lysine 273 is a binding site for L-methionine.

This sequence belongs to the AdoMet synthase family. In terms of assembly, homotetramer; dimer of dimers. It depends on Mg(2+) as a cofactor. K(+) is required as a cofactor.

It is found in the cytoplasm. It carries out the reaction L-methionine + ATP + H2O = S-adenosyl-L-methionine + phosphate + diphosphate. It participates in amino-acid biosynthesis; S-adenosyl-L-methionine biosynthesis; S-adenosyl-L-methionine from L-methionine: step 1/1. Catalyzes the formation of S-adenosylmethionine (AdoMet) from methionine and ATP. The overall synthetic reaction is composed of two sequential steps, AdoMet formation and the subsequent tripolyphosphate hydrolysis which occurs prior to release of AdoMet from the enzyme. The polypeptide is S-adenosylmethionine synthase (Polynucleobacter asymbioticus (strain DSM 18221 / CIP 109841 / QLW-P1DMWA-1) (Polynucleobacter necessarius subsp. asymbioticus)).